The primary structure comprises 238 residues: Orotidine 5'-phosphate decarboxylase (238 aa).

Substrate is bound by residues Asp10, Lys32, 59–68, Thr122, Arg184, Gln193, Gly213, and Arg214; that span reads DLKLHDIPNT. The Proton donor role is filled by Lys61.

The protein belongs to the OMP decarboxylase family. Type 1 subfamily. Homodimer.

It carries out the reaction orotidine 5'-phosphate + H(+) = UMP + CO2. The protein operates within pyrimidine metabolism; UMP biosynthesis via de novo pathway; UMP from orotate: step 2/2. In terms of biological role, catalyzes the decarboxylation of orotidine 5'-monophosphate (OMP) to uridine 5'-monophosphate (UMP). The chain is Orotidine 5'-phosphate decarboxylase from Bacillus cereus (strain ZK / E33L).